The chain runs to 43 residues: Lanthionine-containing peptide SapB (43 aa).

A signal peptide spans 1–21 (MALLDLQAMDTPAEDSFGELR). 2 cross-links (lanthionine (Ser-Cys)) span residues 24–31 (SQVSLLVC) and 34–41 (SSLSVVLC). 2 positions are modified to 2,3-didehydroalanine (Ser): S27 and S37.

Belongs to the lanthionine-containing morphogen protein family. Post-translationally, maturation involves the enzymatic conversion of Ser into dehydrated AA and the formation of thioether bonds with cysteine. This is followed by membrane translocation and cleavage of the modified precursor.

Lanthionine-containing peptide devoid of antibiotic properties, involved in the formation of aerial mycelium. Suggested to self-assemble at air-water interfaces, thus providing a film of surfactant through which nascent aerial hyphae can emerge. The aerial hyphae differentiate further into spores. The sequence is that of Lanthionine-containing peptide SapB (ramS) from Streptomyces griseus.